A 251-amino-acid polypeptide reads, in one-letter code: Ribonuclease PH (251 aa).

Phosphate-binding positions include Arg87 and 125–127 (GTR).

Belongs to the RNase PH family. As to quaternary structure, homohexameric ring arranged as a trimer of dimers.

It catalyses the reaction tRNA(n+1) + phosphate = tRNA(n) + a ribonucleoside 5'-diphosphate. In terms of biological role, phosphorolytic 3'-5' exoribonuclease that plays an important role in tRNA 3'-end maturation. Removes nucleotide residues following the 3'-CCA terminus of tRNAs; can also add nucleotides to the ends of RNA molecules by using nucleoside diphosphates as substrates, but this may not be physiologically important. Probably plays a role in initiation of 16S rRNA degradation (leading to ribosome degradation) during starvation. The polypeptide is Ribonuclease PH (Saccharopolyspora erythraea (strain ATCC 11635 / DSM 40517 / JCM 4748 / NBRC 13426 / NCIMB 8594 / NRRL 2338)).